Reading from the N-terminus, the 163-residue chain is NADH-quinone oxidoreductase subunit I (163 aa).

4Fe-4S ferredoxin-type domains follow at residues 53–83 and 94–123; these read LRRY…IEAG and TRYD…EGPN. [4Fe-4S] cluster contacts are provided by Cys63, Cys66, Cys69, Cys73, Cys103, Cys106, Cys109, and Cys113.

The protein belongs to the complex I 23 kDa subunit family. As to quaternary structure, NDH-1 is composed of 14 different subunits. Subunits NuoA, H, J, K, L, M, N constitute the membrane sector of the complex. [4Fe-4S] cluster serves as cofactor.

It is found in the cell inner membrane. It catalyses the reaction a quinone + NADH + 5 H(+)(in) = a quinol + NAD(+) + 4 H(+)(out). In terms of biological role, NDH-1 shuttles electrons from NADH, via FMN and iron-sulfur (Fe-S) centers, to quinones in the respiratory chain. The immediate electron acceptor for the enzyme in this species is believed to be ubiquinone. Couples the redox reaction to proton translocation (for every two electrons transferred, four hydrogen ions are translocated across the cytoplasmic membrane), and thus conserves the redox energy in a proton gradient. In Parvibaculum lavamentivorans (strain DS-1 / DSM 13023 / NCIMB 13966), this protein is NADH-quinone oxidoreductase subunit I.